The sequence spans 584 residues: 65 kDa membrane protein (584 aa).

Positions 1–30 (MKFKSLITTTLALGVLASTGANFNNNEASA) are cleaved as a signal peptide. MAP repeat units lie at residues 45–154 (GYSK…EDKK), 156–265 (DKAN…ENKA), 266–374 (KRNY…KADR), 375–474 (YVPY…TGTK), and 475–584 (AKAD…KKNK).

It localises to the cell membrane. Functionally, binds various plasma and ECM-proteins. In Staphylococcus aureus (strain Newman), this protein is 65 kDa membrane protein.